Here is a 129-residue protein sequence, read N- to C-terminus: Histone H2B.2 (129 aa).

Positions 1 to 19 are enriched in basic and acidic residues; sequence MAPKAEKKPASKAPAEKKP. Residues 1 to 37 are disordered; it reads MAPKAEKKPASKAPAEKKPAAKKTASSDSKKRTKTRK. N6-acetyllysine; alternate is present on residues K7 and K8. Residues K7 and K8 each participate in a glycyl lysine isopeptide (Lys-Gly) (interchain with G-Cter in SUMO); alternate cross-link. A Phosphoserine modification is found at S11. Residue K12 is modified to N6-acetyllysine. At K17 the chain carries N6-acetyllysine; alternate. A Glycyl lysine isopeptide (Lys-Gly) (interchain with G-Cter in SUMO); alternate cross-link involves residue K17. Residue K18 forms a Glycyl lysine isopeptide (Lys-Gly) (interchain with G-Cter in SUMO) linkage. Residue K123 forms a Glycyl lysine isopeptide (Lys-Gly) (interchain with G-Cter in ubiquitin) linkage.

This sequence belongs to the histone H2B family. As to quaternary structure, the nucleosome is a histone octamer containing two molecules each of H2A, H2B, H3 and H4 assembled in one H3-H4 heterotetramer and two H2A-H2B heterodimers. The octamer wraps approximately 147 bp of DNA. Monoubiquitinated by the UBC2-BRE1 complex to form H2BK123ub1. H2BK123ub1 gives a specific tag for epigenetic transcriptional activation and is also prerequisite for H3K4me and H3K79me formation. H2BK123ub1 also modulates the formation of double-strand breaks during meiosis and is a prerequisite for DNA-damage checkpoint activation. In terms of processing, phosphorylated by STE20 to form H2BS10ph during progression through meiotic prophase. May be correlated with chromosome condensation. Post-translationally, acetylated by GCN5 to form H2BK11ac and H2BK16ac. H2BK16ac can also be formed by ESA1. Acetylation of N-terminal lysines and particularly formation of H2BK11acK16ac has a positive effect on transcription. Sumoylation to form H2BK6su or H2BK7su, and probably also H2BK16su or H2BK17su, occurs preferentially near the telomeres and represses gene transcription.

It is found in the nucleus. The protein localises to the chromosome. Core component of nucleosome. Nucleosomes wrap and compact DNA into chromatin, limiting DNA accessibility to the cellular machineries which require DNA as a template. Histones thereby play a central role in transcription regulation, DNA repair, DNA replication and chromosomal stability. DNA accessibility is regulated via a complex set of post-translational modifications of histones, also called histone code, and nucleosome remodeling. The chain is Histone H2B.2 (HTB2) from Meyerozyma guilliermondii (strain ATCC 6260 / CBS 566 / DSM 6381 / JCM 1539 / NBRC 10279 / NRRL Y-324) (Yeast).